The sequence spans 988 residues: Voltage-gated delayed rectifier potassium channel KCNH5 (988 aa).

Over 1–217 (MPGGKRGLVA…LHYCAFKTTW (217 aa)) the chain is Cytoplasmic. The 73-residue stretch at 14–86 (TFLENIVRRS…TIEKVRQTFD (73 aa)) folds into the PAS domain. A PAC domain is found at 91 to 143 (NCFEVLLYKKNRTPVWFYMQIAPIRNEHEKVVLFLCTFKDITLFKQPIEDDST). A helical transmembrane segment spans residues 218-238 (DWVILILTFYTAIMVPYNVSF). Over 239–243 (KTKQN) the chain is Extracellular. Residues 244–264 (NIAWLVLDSVVDVIFLVDIVL) form a helical membrane-spanning segment. The Cytoplasmic portion of the chain corresponds to 265–291 (NFHTTFVGPGGEVISDPKLIRMNYLKT). A helical membrane pass occupies residues 292 to 312 (WFVIDLLSCLPYDIINAFENV). At 313–319 (DEGISSL) the chain is on the extracellular side. A helical; Voltage-sensor membrane pass occupies residues 320–340 (FSSLKVVRLLRLGRVARKLDH). Residues 341–346 (YLEYGA) are Cytoplasmic-facing. A helical transmembrane segment spans residues 347–367 (AVLVLLVCVFGLVAHWLACIW). Over 368–419 (YSIGDYEVIDEVTNTIQIDSWLYQLALSIGTPYRYNTSAGIWEGGPSKDSLY) the chain is Extracellular. The N-linked (GlcNAc...) asparagine glycan is linked to Asn-403. The pore-forming intramembrane region spans 420–440 (VSSLYFTMTSLTTIGFGNIAP). Positions 432 to 437 (TIGFGN) match the Selectivity filter motif. Residues 441–446 (TTDVEK) lie on the Extracellular side of the membrane. A helical membrane pass occupies residues 447–467 (MFSVAMMMVGSLLYATIFGNV). At 468 to 988 (TTIFQQMYAN…PESDKDEINF (521 aa)) the chain is on the cytoplasmic side. A nucleoside 3',5'-cyclic phosphate is bound at residue 550-668 (AFRLASDGCL…SFSRNLTLTC (119 aa)). Residues 704 to 715 (HPVRKLFQKFKQ) form a calmodulin-binding region. The interval 721-741 (IQGSAQSDPERSQLQVESRPL) is disordered. Residues 723 to 741 (GSAQSDPERSQLQVESRPL) show a composition bias toward polar residues. A Glycyl lysine isopeptide (Lys-Gly) (interchain with G-Cter in ubiquitin) cross-link involves residue Lys-785. The tract at residues 838 to 893 (GLLSEDPKGSDSENSVTKNPLRKTDSCDSGITKSDLRLDKAGEARSPLEHSPSQAD) is disordered. Basic and acidic residues predominate over residues 871 to 885 (SDLRLDKAGEARSPL). Residue Ser-883 is modified to Phosphoserine. A CAD (involved in subunit assembly) region spans residues 909–948 (TLQEVKHELKEDIQLLSCRMTALEKQVAEILKLLSEKSVP).

The protein belongs to the potassium channel family. H (Eag) (TC 1.A.1.20) subfamily. Kv10.2/KCNH5 sub-subfamily. In terms of assembly, homotetramer. The potassium channel is probably composed of a homo- or heterotetrameric complex of pore-forming alpha subunits that can associate with modulating beta subunits. Heteromultimer with KCNH1/EAG.

The protein localises to the membrane. The enzyme catalyses K(+)(in) = K(+)(out). Functionally, pore-forming (alpha) subunit of a voltage-gated delayed rectifier potassium channel that mediates outward-rectifying potassium currents which, on depolarization, reaches a steady-state level and do not inactivate. The kinetic is characterized by a slow activation time course and a small voltage dependence of the activation time constants, therefore, starts to open at more negative voltages. The activation kinetics depend on the prepulse potential and external divalent cation concentration. The time course of activation is biphasic with a fast and a slowly activating current component. With negative prepulses, the current activation is delayed and slowed down several fold, whereas more positive prepulses speed up activation, therefore the activation rate depends on holding potential. This Mus musculus (Mouse) protein is Voltage-gated delayed rectifier potassium channel KCNH5.